A 248-amino-acid polypeptide reads, in one-letter code: Large ribosomal subunit protein uL10m (248 aa).

Residues 1–24 (MATLIQRSLSLAKSSTPALQFLRF) constitute a mitochondrion transit peptide.

Belongs to the universal ribosomal protein uL10 family. As to quaternary structure, component of the mitochondrial ribosome large subunit (39S) which comprises a 16S rRNA and about 50 distinct proteins.

Its subcellular location is the mitochondrion. This Drosophila melanogaster (Fruit fly) protein is Large ribosomal subunit protein uL10m (mRpL10).